Reading from the N-terminus, the 2548-residue chain is Variant-silencing SET domain-containing protein (2548 aa).

The segment covering Ile-37–Asn-48 has biased composition (acidic residues). Disordered regions lie at residues Ile-37 to Asn-61, Gly-336 to Asn-379, and Ser-585 to Thr-629. The segment covering Gly-336–Asp-357 has biased composition (basic and acidic residues). A compositionally biased stretch (acidic residues) spans Gly-358–Asp-378. Positions Asn-602–Asn-616 are enriched in low complexity. The span at Ile-617–Thr-629 shows a compositional bias: polar residues. The PHD-type 1 zinc finger occupies Phe-787–Asp-846. Over residues Ile-929–Arg-944 the composition is skewed to basic residues. 4 disordered regions span residues Ile-929–Asn-1054, Glu-1546–Asp-1575, Glu-1713–Lys-1732, and Ile-1772–Arg-1822. Residues Asp-986–Asn-1016 show a composition bias toward acidic residues. Composition is skewed to low complexity over residues Asn-1017–Asn-1050 and Asn-1551–Asn-1572. Polar residues predominate over residues Gln-1714–Lys-1732. Residues Ser-2067–Phe-2117 enclose the AWS domain. The SET domain maps to Lys-2119–Ser-2240. Tyr-2239 is an S-adenosyl-L-methionine binding site. A PHD-type 2 zinc finger spans residues Asp-2423 to Tyr-2471.

Belongs to the class V-like SAM-binding methyltransferase superfamily.

Its subcellular location is the nucleus. The protein resides in the chromosome. It catalyses the reaction L-lysyl(36)-[histone H3] + 3 S-adenosyl-L-methionine = N(6),N(6),N(6)-trimethyl-L-lysyl(36)-[histone H3] + 3 S-adenosyl-L-homocysteine + 3 H(+). In terms of biological role, histone methyltransferase that specifically represses expression of the surface antigen-coding var genes by mediating trimethylation of 'Lys-36' of histone H3 (H3K36me3) on var genes. SETVS-dependent H3K36me3 is specifically involved in var genes silencing, a central step malaria pathogenesis: each parasite contains 60 distinct var genes that each code for a different PfEMP1 protein. During infection, the clonal parasite population expresses only 1 gene at a time, while the 59 other var genes are silenced. The parasite then switches to the expression of a new variant antigen as an immune-evasion mechanism to avoid the host antibody response. Represses expression of both var mRNA and antisense long non-coding RNA. The protein is Variant-silencing SET domain-containing protein (SETVS) of Plasmodium falciparum (isolate 3D7).